The following is a 128-amino-acid chain: Large ribosomal subunit protein bL19 (128 aa).

The protein belongs to the bacterial ribosomal protein bL19 family.

Its function is as follows. This protein is located at the 30S-50S ribosomal subunit interface and may play a role in the structure and function of the aminoacyl-tRNA binding site. In Bradyrhizobium sp. (strain ORS 278), this protein is Large ribosomal subunit protein bL19.